The sequence spans 237 residues: MSGDAPTPAHDPAAEGLEASVPLESVASMNSDEGQPSAQSAPLADNEARLQQLEQEHSSLREEHETLRSQYMRIAADFDNFRKRQSRDQDDLRLQLICTTLSEILPVVDNFERARQQLEPQGEEAQALHRSYQGLYKQLVEVLKQLGVASMRVVGQAFDPTLHEAVSREPSEEHPEDVVTEELQRGYHLNGRVLRHALVKVSMGPGPQSGASPSSAQSNDDSTATFQGEADPAEPGV.

2 disordered regions span residues 1–52 (MSGD…RLQQ) and 200–237 (KVSM…EPGV). The span at 27 to 40 (ASMNSDEGQPSAQS) shows a compositional bias: polar residues. Positions 204–218 (GPGPQSGASPSSAQS) are enriched in low complexity.

This sequence belongs to the GrpE family. As to quaternary structure, homodimer.

It is found in the cytoplasm. Participates actively in the response to hyperosmotic and heat shock by preventing the aggregation of stress-denatured proteins, in association with DnaK and GrpE. It is the nucleotide exchange factor for DnaK and may function as a thermosensor. Unfolded proteins bind initially to DnaJ; upon interaction with the DnaJ-bound protein, DnaK hydrolyzes its bound ATP, resulting in the formation of a stable complex. GrpE releases ADP from DnaK; ATP binding to DnaK triggers the release of the substrate protein, thus completing the reaction cycle. Several rounds of ATP-dependent interactions between DnaJ, DnaK and GrpE are required for fully efficient folding. This Prochlorococcus marinus (strain MIT 9303) protein is Protein GrpE.